A 476-amino-acid chain; its full sequence is Adenosylhomocysteinase (476 aa).

Positions 67, 142, and 202 each coordinate substrate. 203–205 contributes to the NAD(+) binding site; it reads TTT. Lys232 and Asp236 together coordinate substrate. Residues Asn237, 266–271, Glu289, Asn324, 345–347, and Asn390 each bind NAD(+); these read GYGDVG and IGH.

It belongs to the adenosylhomocysteinase family. Requires NAD(+) as cofactor.

It is found in the cytoplasm. The enzyme catalyses S-adenosyl-L-homocysteine + H2O = L-homocysteine + adenosine. It functions in the pathway amino-acid biosynthesis; L-homocysteine biosynthesis; L-homocysteine from S-adenosyl-L-homocysteine: step 1/1. Functionally, may play a key role in the regulation of the intracellular concentration of adenosylhomocysteine. In Synechococcus sp. (strain CC9902), this protein is Adenosylhomocysteinase.